Consider the following 261-residue polypeptide: tRNA U34 carboxymethyltransferase (261 aa).

Carboxy-S-adenosyl-L-methionine is bound by residues Lys25, Trp39, Lys44, Gly63, 114–115, Tyr135, and Arg250; that span reads VE.

It belongs to the class I-like SAM-binding methyltransferase superfamily. CmoB family. Homotetramer.

The enzyme catalyses carboxy-S-adenosyl-L-methionine + 5-hydroxyuridine(34) in tRNA = 5-carboxymethoxyuridine(34) in tRNA + S-adenosyl-L-homocysteine + H(+). Catalyzes carboxymethyl transfer from carboxy-S-adenosyl-L-methionine (Cx-SAM) to 5-hydroxyuridine (ho5U) to form 5-carboxymethoxyuridine (cmo5U) at position 34 in tRNAs. The polypeptide is tRNA U34 carboxymethyltransferase (Helicobacter pylori (strain HPAG1)).